Here is a 317-residue protein sequence, read N- to C-terminus: Transaldolase (317 aa).

The Schiff-base intermediate with substrate role is filled by K132.

Belongs to the transaldolase family. Type 1 subfamily. Homodimer.

It localises to the cytoplasm. It catalyses the reaction D-sedoheptulose 7-phosphate + D-glyceraldehyde 3-phosphate = D-erythrose 4-phosphate + beta-D-fructose 6-phosphate. The protein operates within carbohydrate degradation; pentose phosphate pathway; D-glyceraldehyde 3-phosphate and beta-D-fructose 6-phosphate from D-ribose 5-phosphate and D-xylulose 5-phosphate (non-oxidative stage): step 2/3. Functionally, transaldolase is important for the balance of metabolites in the pentose-phosphate pathway. This chain is Transaldolase, found in Haemophilus influenzae (strain PittEE).